The primary structure comprises 332 residues: Acetyl-coenzyme A carboxylase carboxyl transferase subunit beta (332 aa).

Residues L24 to E293 enclose the CoA carboxyltransferase N-terminal domain. The interval V288–A332 is disordered. A compositionally biased stretch (low complexity) spans P298 to A332.

This sequence belongs to the AccD/PCCB family. As to quaternary structure, acetyl-CoA carboxylase is a heterohexamer composed of biotin carboxyl carrier protein (AccB), biotin carboxylase (AccC) and two subunits each of ACCase subunit alpha (AccA) and ACCase subunit beta (AccD).

Its subcellular location is the cytoplasm. The enzyme catalyses N(6)-carboxybiotinyl-L-lysyl-[protein] + acetyl-CoA = N(6)-biotinyl-L-lysyl-[protein] + malonyl-CoA. The protein operates within lipid metabolism; malonyl-CoA biosynthesis; malonyl-CoA from acetyl-CoA: step 1/1. In terms of biological role, component of the acetyl coenzyme A carboxylase (ACC) complex. Biotin carboxylase (BC) catalyzes the carboxylation of biotin on its carrier protein (BCCP) and then the CO(2) group is transferred by the transcarboxylase to acetyl-CoA to form malonyl-CoA. This chain is Acetyl-coenzyme A carboxylase carboxyl transferase subunit beta, found in Rhodopseudomonas palustris (strain BisB18).